A 185-amino-acid chain; its full sequence is MKVFGKWDASEVEIPDLSVKGYINLKPRIVLHTGGRHAKQQFKKSELHVVERLINKMMRKEKNTGQKQIAYRIVEEAFDIIHSRTKENPLSVLVRAISNAGPREEVVRLKYGGITVPKAVDTAPQRRVDTALMLIAKGAWQASFKSRRSIQNCLADEIIAAANYDVKSFAVSRKDSIERVAKAAR.

It belongs to the universal ribosomal protein uS7 family. As to quaternary structure, part of the 30S ribosomal subunit.

Functionally, one of the primary rRNA binding proteins, it binds directly to 16S rRNA where it nucleates assembly of the head domain of the 30S subunit. Is located at the subunit interface close to the decoding center. This is Small ribosomal subunit protein uS7 from Methanothrix thermoacetophila (strain DSM 6194 / JCM 14653 / NBRC 101360 / PT) (Methanosaeta thermophila).